The chain runs to 255 residues: Thiazole synthase (255 aa).

The active-site Schiff-base intermediate with DXP is Lys96. 1-deoxy-D-xylulose 5-phosphate-binding positions include Gly157, 184–185 (AG), and 206–207 (NT).

The protein belongs to the ThiG family. As to quaternary structure, homotetramer. Forms heterodimers with either ThiH or ThiS.

It localises to the cytoplasm. It carries out the reaction [ThiS sulfur-carrier protein]-C-terminal-Gly-aminoethanethioate + 2-iminoacetate + 1-deoxy-D-xylulose 5-phosphate = [ThiS sulfur-carrier protein]-C-terminal Gly-Gly + 2-[(2R,5Z)-2-carboxy-4-methylthiazol-5(2H)-ylidene]ethyl phosphate + 2 H2O + H(+). It participates in cofactor biosynthesis; thiamine diphosphate biosynthesis. Catalyzes the rearrangement of 1-deoxy-D-xylulose 5-phosphate (DXP) to produce the thiazole phosphate moiety of thiamine. Sulfur is provided by the thiocarboxylate moiety of the carrier protein ThiS. In vitro, sulfur can be provided by H(2)S. The chain is Thiazole synthase from Clostridium acetobutylicum (strain ATCC 824 / DSM 792 / JCM 1419 / IAM 19013 / LMG 5710 / NBRC 13948 / NRRL B-527 / VKM B-1787 / 2291 / W).